We begin with the raw amino-acid sequence, 2529 residues long: Zinc finger FYVE domain-containing protein 26 (2529 aa).

3 disordered regions span residues His584–His650, Ser689–Arg709, and Val733–Thr810. Ser605 and Ser609 each carry phosphoserine. Over residues Ser689–Glu701 the composition is skewed to basic and acidic residues. The segment covering Ser755–Arg765 has biased composition (basic residues). The segment covering Ser778–Ser796 has biased composition (low complexity). A Phosphoserine modification is found at Ser791. Over residues Ala797–Thr810 the composition is skewed to polar residues. Residues Met859 to Asp884 adopt a coiled-coil conformation. The tract at residues Gly1258–Ser1286 is disordered. The segment covering Thr1263–Pro1273 has biased composition (polar residues). Over residues Ser1274 to Pro1283 the composition is skewed to basic and acidic residues. Residues Val1488–Leu1515 adopt a coiled-coil conformation. Phosphoserine is present on residues Ser1732, Ser1754, Ser1770, and Ser1772. Positions Ala1762–Trp1799 are disordered. The FYVE-type zinc-finger motif lies at Asp1802–Asn1862. Cys1808, Cys1811, Cys1825, Cys1828, Cys1833, Cys1836, Cys1854, and Cys1857 together coordinate Zn(2+). Residues Thr1865–Pro1884 form a disordered region.

The protein belongs to the ZFYVE26 family. In terms of assembly, interacts with AP5Z1, AP5B1, AP5S1 and SPG11. Interacts with TTC19 and KIF13A.

Its subcellular location is the cytoplasm. It localises to the cytoskeleton. It is found in the microtubule organizing center. The protein resides in the centrosome. The protein localises to the midbody. Functionally, phosphatidylinositol 3-phosphate-binding protein required for the abscission step in cytokinesis: recruited to the midbody during cytokinesis and acts as a regulator of abscission. May also be required for efficient homologous recombination DNA double-strand break repair. The protein is Zinc finger FYVE domain-containing protein 26 (Zfyve26) of Mus musculus (Mouse).